Reading from the N-terminus, the 324-residue chain is Sperm acrosome membrane-associated protein 6 (324 aa).

Residues 1 to 26 (MALLALASAVPSALLALAVFRVPAWA) form the signal peptide. Residues 27 to 30 (CLLC) carry the CXXC motif motif. Disulfide bonds link C27/C139, C30/C142, C41/C55, C124/C147, C128/C153, and C170/C226. At 27–295 (CLLCFTTYSE…RPEALTPSNL (269 aa)) the chain is on the extracellular side. The CXXC motif motif lies at 139–142 (CSGC). The region spanning 150-236 (PLDCPVQDVT…VIKQDQRPLA (87 aa)) is the Ig-like domain. N243 is a glycosylation site (N-linked (GlcNAc...) asparagine). A helical transmembrane segment spans residues 296–316 (FLLAVLGALASASATVLAWMF). Residues 317–324 (FRWYCSGN) are Cytoplasmic-facing.

It belongs to the SPACA6 family. Forms a complex with IZUMO1 and TMEM81 on spermatocyte cell membrane required for fertilization. Detected at the sperm head, equatorial region, neck and midpiece (at protein level). Expressed in testis.

It localises to the cytoplasmic vesicle. The protein localises to the secretory vesicle. It is found in the acrosome membrane. Sperm protein required for fusion of sperm with the egg membrane during fertilization. May regulate the expression of sperm surface protein DCST2. The sequence is that of Sperm acrosome membrane-associated protein 6 from Homo sapiens (Human).